A 373-amino-acid polypeptide reads, in one-letter code: Probable G-protein coupled receptor 173 (373 aa).

Residues methionine 1–leucine 26 are Extracellular-facing. N-linked (GlcNAc...) asparagine glycosylation is present at asparagine 3. Residues valine 27 to valine 47 traverse the membrane as a helical segment. Topologically, residues leucine 48–tyrosine 59 are cytoplasmic. A helical transmembrane segment spans residues phenylalanine 60–leucine 80. The Extracellular segment spans residues alanine 81 to lysine 97. A disulfide bridge links cysteine 96 with cysteine 174. Residues isoleucine 98–serine 118 traverse the membrane as a helical segment. The Cytoplasmic portion of the chain corresponds to valine 119–threonine 139. A helical membrane pass occupies residues cysteine 140–phenylalanine 160. Residues aspartate 161–glycine 188 are Extracellular-facing. A glycan (N-linked (GlcNAc...) asparagine) is linked at asparagine 184. The helical transmembrane segment at phenylalanine 189–leucine 209 threads the bilayer. Topologically, residues phenylalanine 210–methionine 287 are cytoplasmic. A helical transmembrane segment spans residues phenylalanine 288–tryptophan 308. The Extracellular segment spans residues arginine 309–leucine 322. Residues alanine 323–leucine 343 form a helical membrane-spanning segment. Over asparagine 344–methionine 373 the chain is Cytoplasmic.

The protein belongs to the G-protein coupled receptor 1 family. In terms of tissue distribution, expressed in the ovary, specifically in granulosa cells of follicles that have passed the primary stage and in oocytes (at protein level). Expressed in preadipocytes.

The protein resides in the cell membrane. Is a receptor for the SMIM20 derived peptides Phoenixin-14 and Phoenixin-20. It mediates the Phoenixin-14 and Phoenixin-20 augmentation of gonadotropin-releasing hormone (GNRH) signaling in the hypothalamus and pituitary gland. In the ovary, it mediates the effects of Phoenixin-14 and Phoenixin-20 induced granulosa cell proliferation during follicular growth. In Mus musculus (Mouse), this protein is Probable G-protein coupled receptor 173 (Gpr173).